The following is a 122-amino-acid chain: Large ribosomal subunit protein uL14 (122 aa).

This sequence belongs to the universal ribosomal protein uL14 family. In terms of assembly, part of the 50S ribosomal subunit. Forms a cluster with proteins L3 and L19. In the 70S ribosome, L14 and L19 interact and together make contacts with the 16S rRNA in bridges B5 and B8.

Its function is as follows. Binds to 23S rRNA. Forms part of two intersubunit bridges in the 70S ribosome. The polypeptide is Large ribosomal subunit protein uL14 (Flavobacterium psychrophilum (strain ATCC 49511 / DSM 21280 / CIP 103535 / JIP02/86)).